A 118-amino-acid polypeptide reads, in one-letter code: Small ribosomal subunit protein uS13 (118 aa).

The disordered stretch occupies residues 91 to 118 (HRRGLPVRGQRTKTNARTRKGPRKPIKK).

Belongs to the universal ribosomal protein uS13 family. Part of the 30S ribosomal subunit. Forms a loose heterodimer with protein S19. Forms two bridges to the 50S subunit in the 70S ribosome.

Its function is as follows. Located at the top of the head of the 30S subunit, it contacts several helices of the 16S rRNA. In the 70S ribosome it contacts the 23S rRNA (bridge B1a) and protein L5 of the 50S subunit (bridge B1b), connecting the 2 subunits; these bridges are implicated in subunit movement. Contacts the tRNAs in the A and P-sites. The sequence is that of Small ribosomal subunit protein uS13 from Serratia proteamaculans (strain 568).